The primary structure comprises 237 residues: ATP-dependent dethiobiotin synthetase BioD (237 aa).

ATP is bound at residue 12-17; the sequence is DAGKTL. Position 16 (Thr-16) interacts with Mg(2+). Lys-37 is an active-site residue. Ser-41 is a binding site for substrate. ATP-binding positions include Asp-54, 116–119, and 213–215; these read EGAG and PRL. Residues Asp-54 and Glu-116 each coordinate Mg(2+).

The protein belongs to the dethiobiotin synthetase family. In terms of assembly, homodimer. Mg(2+) serves as cofactor.

It localises to the cytoplasm. It carries out the reaction (7R,8S)-7,8-diammoniononanoate + CO2 + ATP = (4R,5S)-dethiobiotin + ADP + phosphate + 3 H(+). Its pathway is cofactor biosynthesis; biotin biosynthesis; biotin from 7,8-diaminononanoate: step 1/2. Its function is as follows. Catalyzes a mechanistically unusual reaction, the ATP-dependent insertion of CO2 between the N7 and N8 nitrogen atoms of 7,8-diaminopelargonic acid (DAPA, also called 7,8-diammoniononanoate) to form a ureido ring. The protein is ATP-dependent dethiobiotin synthetase BioD of Chromohalobacter salexigens (strain ATCC BAA-138 / DSM 3043 / CIP 106854 / NCIMB 13768 / 1H11).